The following is a 141-amino-acid chain: Large ribosomal subunit protein uL11 (141 aa).

The protein belongs to the universal ribosomal protein uL11 family. As to quaternary structure, part of the ribosomal stalk of the 50S ribosomal subunit. Interacts with L10 and the large rRNA to form the base of the stalk. L10 forms an elongated spine to which L12 dimers bind in a sequential fashion forming a multimeric L10(L12)X complex. One or more lysine residues are methylated.

Functionally, forms part of the ribosomal stalk which helps the ribosome interact with GTP-bound translation factors. The protein is Large ribosomal subunit protein uL11 of Chlorobium phaeobacteroides (strain DSM 266 / SMG 266 / 2430).